Here is a 371-residue protein sequence, read N- to C-terminus: Carnitine monooxygenase oxygenase subunit (371 aa).

Residues 44–152 (WICVAHGSEL…VEEYAGFVFI (109 aa)) form the Rieske domain. 4 residues coordinate [2Fe-2S] cluster: Cys-86, His-88, Cys-106, and His-109. His-208, His-213, and Asp-323 together coordinate Fe cation.

The protein belongs to the bacterial ring-hydroxylating dioxygenase alpha subunit family. CntA subfamily. Composed of an oxygenase subunit and a reductase subunit. It depends on [2Fe-2S] cluster as a cofactor. Requires Fe cation as cofactor.

The enzyme catalyses (R)-carnitine + NADH + O2 + H(+) = (3R)-3-hydroxy-4-oxobutanoate + trimethylamine + NAD(+) + H2O. It carries out the reaction (R)-carnitine + NADPH + O2 + H(+) = (3R)-3-hydroxy-4-oxobutanoate + trimethylamine + NADP(+) + H2O. It participates in amine and polyamine metabolism; carnitine metabolism. With respect to regulation, inhibited by EDTA. Converts carnitine to trimethylamine and malic semialdehyde. Acts on both enantiomers. The protein is Carnitine monooxygenase oxygenase subunit of Acinetobacter pittii (strain PHEA-2).